Consider the following 216-residue polypeptide: Thylakoid lumenal 16.5 kDa protein, chloroplastic (216 aa).

Residues 1–38 constitute a chloroplast transit peptide; sequence MAKSLLCSSTLNPFFSTTLSSSKKNQIAYSGNSKNQTS. The transit peptide at 39 to 73 directs the protein to the thylakoid; the sequence is SSLLWKRRELSLGFMSSLVAIGLVSNDRRRHDANA.

It localises to the plastid. The protein localises to the chloroplast thylakoid lumen. The chain is Thylakoid lumenal 16.5 kDa protein, chloroplastic from Arabidopsis thaliana (Mouse-ear cress).